The chain runs to 551 residues: Glucans biosynthesis protein D (551 aa).

A signal peptide (tat-type signal) is located at residues 1–32; it reads MDRRRFIKGSMAMAAVCGTSGIASLFSQAAFA.

It belongs to the OpgD/OpgG family. In terms of processing, predicted to be exported by the Tat system. The position of the signal peptide cleavage has not been experimentally proven.

It localises to the periplasm. It functions in the pathway glycan metabolism; osmoregulated periplasmic glucan (OPG) biosynthesis. Functionally, probably involved in the control of the structural glucose backbone of osmoregulated periplasmic glucans (OPGs). In Escherichia coli O139:H28 (strain E24377A / ETEC), this protein is Glucans biosynthesis protein D.